Reading from the N-terminus, the 537-residue chain is Apoptosis inhibitor 5-like protein API5 (537 aa).

The tract at residues 9 to 363 is ARM-like and Heat-like helical repeats; sequence AEVERLYELG…TTNSLCGYKI (355 aa). The tract at residues 465–537 is disordered; it reads WMEQPKKPAP…GGRGRGWGYR (73 aa). Residues 474–492 are compositionally biased toward polar residues; sequence PTTTGGKRSQPATNGNTPA.

It belongs to the API5 family. As to quaternary structure, interacts with AIP1 and AIP2.

The protein localises to the nucleus. Functionally, putative anti-apoptotic factor involved in the regulation of tapetal programmed cell death (PCD) and degeneration during anther development. Interacts directly with the DEAD-box ATP-dependent RNA helicases AIP1 and AIP2 that form dimers and bind the promoter region of the cysteine protease CP1 involved in tapetum PCD. In Oryza sativa subsp. japonica (Rice), this protein is Apoptosis inhibitor 5-like protein API5.